The sequence spans 359 residues: Small ribosomal subunit protein uS2 (359 aa).

Residues 232–295 form a disordered region; that stretch reads EPQFKPSEFT…PVGTEPVATT (64 aa). Basic and acidic residues-rich tracts occupy residues 239-250 and 257-273; these read EFTRRDGDENRN and DNRR…DTHY.

This sequence belongs to the universal ribosomal protein uS2 family.

This Spiroplasma citri protein is Small ribosomal subunit protein uS2 (rpsB).